The sequence spans 360 residues: Ethanolamine-phosphate cytidylyltransferase (360 aa).

CTP is bound by residues G207–F208, H215–A218, K243, H291–D294, and H321–L325.

Belongs to the cytidylyltransferase family.

It carries out the reaction phosphoethanolamine + CTP + H(+) = CDP-ethanolamine + diphosphate. It functions in the pathway phospholipid metabolism; phosphatidylethanolamine biosynthesis; phosphatidylethanolamine from ethanolamine: step 2/3. In terms of biological role, ethanolamine-phosphate cytidylyltransferase that catalyzes the second step in the synthesis of phosphatidylethanolamine (PE) from ethanolamine via the CDP-ethanolamine pathway. The protein is Ethanolamine-phosphate cytidylyltransferase (pctA) of Dictyostelium discoideum (Social amoeba).